Reading from the N-terminus, the 263-residue chain is Chromosomal replication initiator protein DnaA (263 aa).

Aspartate 1 is a region of interest (domain I, interacts with DnaA modulators). Position 1 (aspartate 1) is a region of interest, domain II. The segment at 1–177 is domain III, AAA+ region; it reads DSGLGKTHLL…GIINKIEFSI (177 aa). Positions 3, 5, 6, and 7 each coordinate ATP. The segment at 178-263 is domain IV, binds dsDNA; that stretch reads IQDNSAAPKI…KNYSEIGVAF (86 aa).

It belongs to the DnaA family. Oligomerizes as a right-handed, spiral filament on DNA at oriC.

Its subcellular location is the cytoplasm. Plays an essential role in the initiation and regulation of chromosomal replication. ATP-DnaA binds to the origin of replication (oriC) to initiate formation of the DNA replication initiation complex once per cell cycle. Binds the DnaA box (a 9 base pair repeat at the origin) and separates the double-stranded (ds)DNA. Forms a right-handed helical filament on oriC DNA; dsDNA binds to the exterior of the filament while single-stranded (ss)DNA is stabiized in the filament's interior. The ATP-DnaA-oriC complex binds and stabilizes one strand of the AT-rich DNA unwinding element (DUE), permitting loading of DNA polymerase. After initiation quickly degrades to an ADP-DnaA complex that is not apt for DNA replication. Binds acidic phospholipids. The protein is Chromosomal replication initiator protein DnaA of Spiroplasma apis.